A 234-amino-acid chain; its full sequence is Thrombin-like enzyme acutin (234 aa).

Residue M1 is a propeptide. A Peptidase S1 domain is found at 2 to 225 (VIGGDECDIN…YTDWIQRNIA (224 aa)). 6 disulfides stabilise this stretch: C8-C140, C27-C43, C75-C232, C119-C186, C151-C165, and C176-C201. A glycan (N-linked (GlcNAc...) asparagine) is linked at N21. Residues H42 and D87 each act as charge relay system in the active site. Catalysis depends on S180, which acts as the Charge relay system.

This sequence belongs to the peptidase S1 family. Snake venom subfamily. Monomer. In terms of tissue distribution, expressed by the venom gland.

It is found in the secreted. Thrombin-like snake venom serine protease. Has arginyl esterase and fibrinogen clotting activities. The sequence is that of Thrombin-like enzyme acutin from Deinagkistrodon acutus (Hundred-pace snake).